The sequence spans 217 residues: 3,4-dihydroxy-2-butanone 4-phosphate synthase (217 aa).

Residues 37-38, Asp-42, 150-154, and Glu-174 contribute to the D-ribulose 5-phosphate site; these read RE and RGGHT. Glu-38 contacts Mg(2+). Position 153 (His-153) interacts with Mg(2+).

This sequence belongs to the DHBP synthase family. As to quaternary structure, homodimer. Mg(2+) serves as cofactor. Mn(2+) is required as a cofactor.

It catalyses the reaction D-ribulose 5-phosphate = (2S)-2-hydroxy-3-oxobutyl phosphate + formate + H(+). It participates in cofactor biosynthesis; riboflavin biosynthesis; 2-hydroxy-3-oxobutyl phosphate from D-ribulose 5-phosphate: step 1/1. Its function is as follows. Catalyzes the conversion of D-ribulose 5-phosphate to formate and 3,4-dihydroxy-2-butanone 4-phosphate. In Cronobacter sakazakii (strain ATCC BAA-894) (Enterobacter sakazakii), this protein is 3,4-dihydroxy-2-butanone 4-phosphate synthase.